The chain runs to 303 residues: Putative ring-cleaving dioxygenase MhqE (303 aa).

2 consecutive VOC domains span residues 5–129 and 150–266; these read GLHH…IMED and GMKG…IATD. Fe cation-binding residues include His-8, His-215, and Glu-262.

This sequence belongs to the extradiol ring-cleavage dioxygenase family. Fe(2+) serves as cofactor.

It is found in the cytoplasm. Its function is as follows. Putative ring-cleavage dioxygenase that may contribute to the degradation of aromatic compounds. The polypeptide is Putative ring-cleaving dioxygenase MhqE (mhqE) (Bacillus subtilis (strain 168)).